We begin with the raw amino-acid sequence, 318 residues long: Homoserine O-succinyltransferase (318 aa).

Cys142 acts as the Acyl-thioester intermediate in catalysis. Substrate-binding residues include Lys163 and Ser192. His235 (proton acceptor) is an active-site residue. Residue Glu237 is part of the active site. Arg249 is a substrate binding site.

The protein belongs to the MetA family.

The protein localises to the cytoplasm. The enzyme catalyses L-homoserine + succinyl-CoA = O-succinyl-L-homoserine + CoA. The protein operates within amino-acid biosynthesis; L-methionine biosynthesis via de novo pathway; O-succinyl-L-homoserine from L-homoserine: step 1/1. Its function is as follows. Transfers a succinyl group from succinyl-CoA to L-homoserine, forming succinyl-L-homoserine. This is Homoserine O-succinyltransferase from Shewanella putrefaciens (strain CN-32 / ATCC BAA-453).